The following is a 163-amino-acid chain: MDALEGESFALSFSSASDAEFDAVVGYLEDIIMDDEFQLLQRNFMDKYYLEFEDTEENKLIYTPIFNEYISLVEKYIEEQLLQRIPEFNMAAFTTTLQHHKDEVAGDIFDMLLTFTDFLAFKEMFLDYRAEKEGRGLDLSSGLVVTSLCKSSSLPASQNNLRH.

The protein belongs to the ARL2BP family. As to quaternary structure, found in a complex with ARL2BP, ARL2 and SLC25A6. Found in a complex with ARL2, ARL2BP and SLC25A4. Interacts with STAT2, STAT3 and STAT4. Interacts with GTP-bound ARL2 and ARL3; the complex ARL2-ARL2BP as well as ARL2BP alone, binds to SLC25A4. Interaction with ARL2 may be required for targeting to cilia basal body. Interacts with STAT3; interaction is enhanced with ARL2. Expressed in retina pigment epithelial cells (at protein level). Widely expressed.

It localises to the cytoplasm. The protein resides in the mitochondrion intermembrane space. It is found in the cytoskeleton. The protein localises to the microtubule organizing center. Its subcellular location is the centrosome. It localises to the nucleus. The protein resides in the spindle. It is found in the cilium basal body. Together with ARL2, plays a role in the nuclear translocation, retention and transcriptional activity of STAT3. May play a role as an effector of ARL2. The chain is ADP-ribosylation factor-like protein 2-binding protein (ARL2BP) from Homo sapiens (Human).